The primary structure comprises 91 residues: Putative regulatory protein Helmi_20580 (91 aa).

It belongs to the RemA family.

The chain is Putative regulatory protein Helmi_20580 from Heliobacterium modesticaldum (strain ATCC 51547 / Ice1).